A 323-amino-acid chain; its full sequence is Viral cathepsin (323 aa).

Residues 1-16 form the signal peptide; that stretch reads MNKILFYLFVYAVVKS. Positions 17-112 are cleaved as a propeptide — activation peptide; it reads AAYDPLKAPN…ILLDQPPGKG (96 aa). 3 disulfide bridges follow: Cys133–Cys174, Cys167–Cys207, and Cys262–Cys310. The active site involves Cys136. N-linked (GlcNAc...) asparagine; by host glycosylation occurs at Asn158. Catalysis depends on residues His269 and Asn289.

It belongs to the peptidase C1 family. In terms of processing, synthesized as an inactive proenzyme and activated by proteolytic removal of the inhibitory propeptide.

It catalyses the reaction Endopeptidase of broad specificity, hydrolyzing substrates of both cathepsin L and cathepsin B.. In terms of biological role, cysteine protease that plays an essential role in host liquefaction to facilitate horizontal transmission of the virus. May participate in the degradation of foreign protein expressed by the baculovirus system. The polypeptide is Viral cathepsin (VCATH) (Bombyx mori (Silk moth)).